An 80-amino-acid polypeptide reads, in one-letter code: Serine protease inhibitor Kazal-type 6 (80 aa).

The first 23 residues, 1-23 (MKTSGVFLLLSLALFCFFSGVFG), serve as a signal peptide directing secretion. Q24 carries the post-translational modification Pyrrolidone carboxylic acid. One can recognise a Kazal-like domain in the interval 24–80 (QGAQVDCAEFKDPKVYCTRESNPHCGSDGQTYGNKCAFCKAVMKSGGKINLKHRGKC). 3 disulfide bridges follow: C30-C62, C40-C59, and C48-C80.

As to expression, seminal plasma.

It is found in the secreted. Functionally, serine protease inhibitor selective for kallikreins. Efficiently inhibits KLK4, KLK5, KLK6, KLK7, KLK12, KLK13 and KLK14. Doesn't inhibit KLK8. Inhibits acrosin, trypsin, and chymotrypsin. The polypeptide is Serine protease inhibitor Kazal-type 6 (SPINK6) (Bos taurus (Bovine)).